A 170-amino-acid chain; its full sequence is Small ribosomal subunit protein uS9 (170 aa).

A disordered region spans residues 1–47; it reads MAETTPEQPLEEIDIDSYTTESEVPVEGEYTSESMASAFGEPQPAAG.

This sequence belongs to the universal ribosomal protein uS9 family.

This is Small ribosomal subunit protein uS9 (rpsI) from Streptomyces coelicolor (strain ATCC BAA-471 / A3(2) / M145).